Consider the following 189-residue polypeptide: Small ribosomal subunit protein uS7 (189 aa).

It belongs to the universal ribosomal protein uS7 family. In terms of assembly, part of the 30S ribosomal subunit.

In terms of biological role, one of the primary rRNA binding proteins, it binds directly to 16S rRNA where it nucleates assembly of the head domain of the 30S subunit. Is located at the subunit interface close to the decoding center. This chain is Small ribosomal subunit protein uS7, found in Methanosarcina mazei (strain ATCC BAA-159 / DSM 3647 / Goe1 / Go1 / JCM 11833 / OCM 88) (Methanosarcina frisia).